The sequence spans 153 residues: 6,7-dimethyl-8-ribityllumazine synthase (153 aa).

5-amino-6-(D-ribitylamino)uracil contacts are provided by residues phenylalanine 21, 55–57, and 79–81; these read AFE and TVI. 84 to 85 contacts (2S)-2-hydroxy-3-oxobutyl phosphate; that stretch reads AT. Histidine 87 acts as the Proton donor in catalysis. Phenylalanine 112 serves as a coordination point for 5-amino-6-(D-ribitylamino)uracil. Arginine 126 is a (2S)-2-hydroxy-3-oxobutyl phosphate binding site.

Belongs to the DMRL synthase family. Forms an icosahedral capsid composed of 60 subunits, arranged as a dodecamer of pentamers.

The enzyme catalyses (2S)-2-hydroxy-3-oxobutyl phosphate + 5-amino-6-(D-ribitylamino)uracil = 6,7-dimethyl-8-(1-D-ribityl)lumazine + phosphate + 2 H2O + H(+). The protein operates within cofactor biosynthesis; riboflavin biosynthesis; riboflavin from 2-hydroxy-3-oxobutyl phosphate and 5-amino-6-(D-ribitylamino)uracil: step 1/2. Catalyzes the formation of 6,7-dimethyl-8-ribityllumazine by condensation of 5-amino-6-(D-ribitylamino)uracil with 3,4-dihydroxy-2-butanone 4-phosphate. This is the penultimate step in the biosynthesis of riboflavin. The polypeptide is 6,7-dimethyl-8-ribityllumazine synthase (Bacillus cereus (strain 03BB102)).